A 76-amino-acid chain; its full sequence is Small ribosomal subunit protein uS17 (76 aa).

This sequence belongs to the universal ribosomal protein uS17 family. As to quaternary structure, part of the 30S ribosomal subunit.

One of the primary rRNA binding proteins, it binds specifically to the 5'-end of 16S ribosomal RNA. This Anaplasma phagocytophilum (strain HZ) protein is Small ribosomal subunit protein uS17.